A 204-amino-acid chain; its full sequence is Large ribosomal subunit protein uL22m (204 aa).

A mitochondrion-targeting transit peptide spans 1–38; sequence MAAVILERLGALWVQNLRGKLALGILPQSHIHTSASLE.

Belongs to the universal ribosomal protein uL22 family. In terms of assembly, component of the mitochondrial ribosome large subunit (39S) which comprises a 16S rRNA and about 50 distinct proteins.

Its subcellular location is the mitochondrion. This chain is Large ribosomal subunit protein uL22m (MRPL22), found in Bos taurus (Bovine).